A 321-amino-acid chain; its full sequence is Phospho-N-acetylmuramoyl-pentapeptide-transferase (321 aa).

Transmembrane regions (helical) follow at residues 1-21 (MIFV…PVLI), 50-70 (MGGL…IIFV), 76-96 (IILL…DDYI), 112-132 (FLAQ…FHLV), 140-160 (IPFT…IVFL), 176-196 (GLAT…SFVL), 200-220 (AIGI…PYNI), 225-245 (VFMG…ISIM), 250-270 (LSLI…MLQV), and 300-320 (VVTV…WIGV).

The protein belongs to the glycosyltransferase 4 family. MraY subfamily. The cofactor is Mg(2+).

The protein localises to the cell membrane. It catalyses the reaction UDP-N-acetyl-alpha-D-muramoyl-L-alanyl-gamma-D-glutamyl-L-lysyl-D-alanyl-D-alanine + di-trans,octa-cis-undecaprenyl phosphate = Mur2Ac(oyl-L-Ala-gamma-D-Glu-L-Lys-D-Ala-D-Ala)-di-trans,octa-cis-undecaprenyl diphosphate + UMP. Its pathway is cell wall biogenesis; peptidoglycan biosynthesis. In terms of biological role, catalyzes the initial step of the lipid cycle reactions in the biosynthesis of the cell wall peptidoglycan: transfers peptidoglycan precursor phospho-MurNAc-pentapeptide from UDP-MurNAc-pentapeptide onto the lipid carrier undecaprenyl phosphate, yielding undecaprenyl-pyrophosphoryl-MurNAc-pentapeptide, known as lipid I. The sequence is that of Phospho-N-acetylmuramoyl-pentapeptide-transferase from Staphylococcus aureus (strain bovine RF122 / ET3-1).